Consider the following 147-residue polypeptide: MTTEDRVEIYTDGACKGNPGPGGWGALMRYKGKEKELFGGERGTTNNRMEIMAVIRALAALNRPCKVVVYTDSQYVQKGISEWIHGWKARGWKTAAKEPVKNADLWQQLDAERNRHLDVEWRWVKGHAGHEFNERADQLANKGVESV.

The 143-residue stretch at 3-145 (TEDRVEIYTD…ADQLANKGVE (143 aa)) folds into the RNase H type-1 domain. Mg(2+)-binding residues include Asp-12, Glu-50, Asp-72, and Asp-137.

It belongs to the RNase H family. Monomer. Mg(2+) serves as cofactor.

It is found in the cytoplasm. The enzyme catalyses Endonucleolytic cleavage to 5'-phosphomonoester.. Endonuclease that specifically degrades the RNA of RNA-DNA hybrids. The polypeptide is Ribonuclease H (Chromobacterium violaceum (strain ATCC 12472 / DSM 30191 / JCM 1249 / CCUG 213 / NBRC 12614 / NCIMB 9131 / NCTC 9757 / MK)).